The sequence spans 293 residues: NAD kinase (293 aa).

D74 serves as the catalytic Proton acceptor. NAD(+)-binding positions include 74–75, R79, 148–149, R176, D178, 189–194, and Q248; these read DG, NE, and TAYALS.

Belongs to the NAD kinase family. It depends on a divalent metal cation as a cofactor.

It is found in the cytoplasm. It catalyses the reaction NAD(+) + ATP = ADP + NADP(+) + H(+). In terms of biological role, involved in the regulation of the intracellular balance of NAD and NADP, and is a key enzyme in the biosynthesis of NADP. Catalyzes specifically the phosphorylation on 2'-hydroxyl of the adenosine moiety of NAD to yield NADP. This chain is NAD kinase, found in Blochmanniella floridana.